We begin with the raw amino-acid sequence, 500 residues long: POU domain, class 3, transcription factor 3 (500 aa).

Positions 32-52 (GGGGGGGGGGGGAGGGGGGMQ) are enriched in gly residues. 4 disordered regions span residues 32–63 (GGGG…SGAY), 122–190 (WSGS…WGAA), 231–319 (NGML…TPTS), and 461–500 (EKRM…TSVQ). Composition is skewed to pro residues over residues 134–146 (QQPP…PPQG) and 171–181 (HLGPPPPPPHQ). The segment covering 241-251 (GGGGGGAGGGA) has biased composition (gly residues). The span at 270 to 287 (HHHHHHHHAHPHPPHPHH) shows a compositional bias: basic residues. Gly residues predominate over residues 293–303 (HHGGGGGGAGP). The POU-specific domain maps to 314-388 (EDTPTSDDLE…LLNKWLEEAD (75 aa)). Positions 406–465 (KRKKRTSIEVSVKGALESHFLKCPKPSAQEITNLADSLQLEKEVVRVWFCNRRQKEKRMT) form a DNA-binding region, homeobox. Positions 468–486 (GIQQQTPDDVYSQVGTVSA) are enriched in polar residues.

Belongs to the POU transcription factor family. Class-3 subfamily. As to quaternary structure, homodimer. As to expression, brain.

The protein resides in the nucleus. Transcription factor that acts synergistically with SOX11 and SOX4. Plays a role in neuronal development. Is implicated in an enhancer activity at the embryonic met-mesencephalic junction; the enhancer element contains the octamer motif (5'-ATTTGCAT-3'). In Homo sapiens (Human), this protein is POU domain, class 3, transcription factor 3.